The primary structure comprises 388 residues: Acetate kinase (388 aa).

Asparagine 8 serves as a coordination point for Mg(2+). Lysine 15 is a binding site for ATP. Arginine 88 contributes to the substrate binding site. Residue aspartate 144 is the Proton donor/acceptor of the active site. ATP contacts are provided by residues 202 to 206, 276 to 278, and 321 to 325; these read HLGNG, DMR, and GVGEN. Residue glutamate 375 coordinates Mg(2+).

The protein belongs to the acetokinase family. In terms of assembly, homodimer. Requires Mg(2+) as cofactor. Mn(2+) is required as a cofactor.

It localises to the cytoplasm. It carries out the reaction acetate + ATP = acetyl phosphate + ADP. The protein operates within metabolic intermediate biosynthesis; acetyl-CoA biosynthesis; acetyl-CoA from acetate: step 1/2. Catalyzes the formation of acetyl phosphate from acetate and ATP. Can also catalyze the reverse reaction. The polypeptide is Acetate kinase (Mycoplasmoides gallisepticum (strain R(low / passage 15 / clone 2)) (Mycoplasma gallisepticum)).